Reading from the N-terminus, the 388-residue chain is Arginine biosynthesis bifunctional protein ArgJ (388 aa).

Substrate-binding residues include T150, K172, T183, E263, N383, and T388. T183 functions as the Nucleophile in the catalytic mechanism.

This sequence belongs to the ArgJ family. In terms of assembly, heterotetramer of two alpha and two beta chains.

It is found in the cytoplasm. It carries out the reaction N(2)-acetyl-L-ornithine + L-glutamate = N-acetyl-L-glutamate + L-ornithine. The catalysed reaction is L-glutamate + acetyl-CoA = N-acetyl-L-glutamate + CoA + H(+). The protein operates within amino-acid biosynthesis; L-arginine biosynthesis; L-ornithine and N-acetyl-L-glutamate from L-glutamate and N(2)-acetyl-L-ornithine (cyclic): step 1/1. Its pathway is amino-acid biosynthesis; L-arginine biosynthesis; N(2)-acetyl-L-ornithine from L-glutamate: step 1/4. In terms of biological role, catalyzes two activities which are involved in the cyclic version of arginine biosynthesis: the synthesis of N-acetylglutamate from glutamate and acetyl-CoA as the acetyl donor, and of ornithine by transacetylation between N(2)-acetylornithine and glutamate. This Corynebacterium efficiens (strain DSM 44549 / YS-314 / AJ 12310 / JCM 11189 / NBRC 100395) protein is Arginine biosynthesis bifunctional protein ArgJ.